A 299-amino-acid chain; its full sequence is Endonuclease G, mitochondrial (299 aa).

Residues 1-48 (MQLLRAGLTLALGAGLGAAAESWWRQRADARATPGLLSRLPVLPVAAA) constitute a mitochondrion transit peptide. Residue Thr-130 is modified to Phosphothreonine. The Proton acceptor role is filled by His-143. Residue Asn-174 participates in Mg(2+) binding. The tract at residues 288–298 (AGSLKAITAGS) is essential for deoxyribonuclease activity. Position 290 is a phosphoserine (Ser-290).

This sequence belongs to the DNA/RNA non-specific endonuclease family. As to quaternary structure, homodimer; disulfide-linked. Homodimerization is essential for its activity. Interacts with YWHAG. Mg(2+) is required as a cofactor. Post-translationally, GSK3-beta-mediated dual phosphorylations at Thr-130 and Ser-290 is necessary for its interaction with YWHAG and the induction of autophagy.

It localises to the mitochondrion. Endonuclease that preferentially catalyzes the cleavage of double-stranded 5-hydroxymethylcytosine (5hmC)-modified DNA. The 5hmC-modified nucleotide does not increase the binding affinity, but instead increases the efficiency of cutting and specifies the site of cleavage for the modified DNAs. Shows significantly higher affinity for four- stranded Holliday junction over duplex and single-stranded DNAs. Promotes conservative recombination when the DNA is 5hmC-modified. Promotes autophagy through the suppression of mTOR by its phosphorylation-mediated interaction with YWHAG and its endonuclease activity-mediated DNA damage response. GSK3-beta mediated phosphorylation of ENDOG enhances its interaction with YWHAG, leading to the release of TSC2 and PIK3C3 from YWHAG resulting in mTOR pathway suppression and autophagy initiation. Promotes cleavage of mtDNA in response to oxidative and nitrosative stress, in turn inducing compensatory mtDNA replication. This is Endonuclease G, mitochondrial (ENDOG) from Bos taurus (Bovine).